The following is a 405-amino-acid chain: Argininosuccinate synthase (405 aa).

Residues 10 to 18 (AYSGGLDTS) and Ala-37 each bind ATP. L-citrulline is bound by residues Tyr-88 and Ser-93. Residue Gly-118 coordinates ATP. 3 residues coordinate L-aspartate: Thr-120, Asn-124, and Asp-125. Asn-124 contributes to the L-citrulline binding site. L-citrulline is bound by residues Arg-128, Ser-179, Ser-188, Glu-264, and Tyr-276.

Belongs to the argininosuccinate synthase family. Type 1 subfamily. In terms of assembly, homotetramer.

Its subcellular location is the cytoplasm. It carries out the reaction L-citrulline + L-aspartate + ATP = 2-(N(omega)-L-arginino)succinate + AMP + diphosphate + H(+). It functions in the pathway amino-acid biosynthesis; L-arginine biosynthesis; L-arginine from L-ornithine and carbamoyl phosphate: step 2/3. The sequence is that of Argininosuccinate synthase from Nitrosococcus oceani (strain ATCC 19707 / BCRC 17464 / JCM 30415 / NCIMB 11848 / C-107).